We begin with the raw amino-acid sequence, 140 residues long: ATP synthase epsilon chain (140 aa).

This sequence belongs to the ATPase epsilon chain family. F-type ATPases have 2 components, CF(1) - the catalytic core - and CF(0) - the membrane proton channel. CF(1) has five subunits: alpha(3), beta(3), gamma(1), delta(1), epsilon(1). CF(0) has three main subunits: a, b and c.

The protein localises to the cell membrane. Functionally, produces ATP from ADP in the presence of a proton gradient across the membrane. The chain is ATP synthase epsilon chain from Dehalococcoides mccartyi (strain ATCC BAA-2100 / JCM 16839 / KCTC 5957 / BAV1).